A 298-amino-acid chain; its full sequence is 4-hydroxy-tetrahydrodipicolinate synthase (298 aa).

Thr51 serves as a coordination point for pyruvate. Residue Tyr139 is the Proton donor/acceptor of the active site. Lys167 acts as the Schiff-base intermediate with substrate in catalysis. Residue Ile209 participates in pyruvate binding.

This sequence belongs to the DapA family. In terms of assembly, homotetramer; dimer of dimers.

The protein localises to the cytoplasm. It carries out the reaction L-aspartate 4-semialdehyde + pyruvate = (2S,4S)-4-hydroxy-2,3,4,5-tetrahydrodipicolinate + H2O + H(+). It functions in the pathway amino-acid biosynthesis; L-lysine biosynthesis via DAP pathway; (S)-tetrahydrodipicolinate from L-aspartate: step 3/4. Its function is as follows. Catalyzes the condensation of (S)-aspartate-beta-semialdehyde [(S)-ASA] and pyruvate to 4-hydroxy-tetrahydrodipicolinate (HTPA). The polypeptide is 4-hydroxy-tetrahydrodipicolinate synthase (Pasteurella multocida (strain Pm70)).